The chain runs to 82 residues: Small ribosomal subunit protein bS16 (82 aa).

It belongs to the bacterial ribosomal protein bS16 family.

The protein is Small ribosomal subunit protein bS16 of Actinobacillus succinogenes (strain ATCC 55618 / DSM 22257 / CCUG 43843 / 130Z).